The sequence spans 351 residues: Protein Wnt-4 (351 aa).

The N-terminal stretch at 1 to 22 (MSPRSCLRSLRLLVFAVFSAAA) is a signal peptide. 11 disulfide bridges follow: C78-C89, C128-C136, C138-C155, C206-C220, C208-C215, C280-C311, C296-C306, C310-C350, C326-C341, C328-C338, and C333-C334. N88 carries N-linked (GlcNAc...) asparagine glycosylation. Residue S212 is the site of O-palmitoleoyl serine; by PORCN attachment. A glycan (N-linked (GlcNAc...) asparagine) is linked at N297.

It belongs to the Wnt family. As to quaternary structure, interacts with PORCN. Interacts with PKD1. Palmitoleoylation is required for efficient binding to frizzled receptors. Depalmitoleoylation leads to Wnt signaling pathway inhibition. In terms of tissue distribution, in adults in lung and brain.

Its subcellular location is the secreted. The protein localises to the extracellular space. The protein resides in the extracellular matrix. In terms of biological role, ligand for members of the frizzled family of seven transmembrane receptors. Plays an important role in the embryonic development of the urogenital tract and the lung. Required for normal mesenchyme to epithelium transition during embryonic kidney development. Required for the formation of early epithelial renal vesicles during kidney development. Required for normal formation of the Mullerian duct in females, and normal levels of oocytes in the ovaries. Required for normal down-regulation of 3 beta-hydroxysteroid dehydrogenase in the ovary. Required for normal lung development and for normal patterning of trachael cartilage rings. The chain is Protein Wnt-4 (Wnt4) from Mus musculus (Mouse).